The chain runs to 390 residues: Protein dom34 (390 aa).

The protein belongs to the eukaryotic release factor 1 family. Pelota subfamily. Component of the Dom34-Hbs1 complex, also named Pelota-HBS1L complex, composed of dom34 and hbs1. A divalent metal cation is required as a cofactor.

The protein resides in the cytoplasm. Functionally, component of the Dom34-Hbs1 complex, a complex that recognizes stalled ribosomes and triggers the No-Go Decay (NGD) pathway. In the Dom34-Hbs1 complex, dom34 recognizes ribosomes stalled at the 3' end of an mRNA and engages stalled ribosomes by destabilizing mRNA in the mRNA channel. Following ribosome-binding, the Dom34-Hbs1 complex promotes the disassembly of stalled ribosomes, followed by degradation of damaged mRNAs as part of the NGD pathway. This Schizosaccharomyces pombe (strain 972 / ATCC 24843) (Fission yeast) protein is Protein dom34.